We begin with the raw amino-acid sequence, 496 residues long: MSEEHVHLDESEVYHIRKQKLAELRTSGFNFPNTFRREHLADALLKQYSETEKQTLEQKHVKVSVAGRIVLRRIMGKASFFHIQDVSGRIQVYLRSNDLPDVYEQFKHWDLGDIVGVQGELFKTNTGELTINAEHVELLTKSLRPLPDKFHGLADQELKYRKRYVDLIANEDSRKTFLIRSHLIKAFREFMDDNHFLEVETPMMHPIPGGALARPFVTHHNTLDMTMYLRIAPELYLKRLVVGGFERVYEINRNFRNEGISTRHNPEFTMLEFYQAYADYNDLMNFTEQLFHYLCDKVLATRQIEYQGQVIDFNKPFERLSVKEAILKYHPDIKAQQLETVEGCRTLLNDLDLPYKETDGLGKLQIILFEETVEHQLFQPTFITEYPTEISPLARRSDTNPEVTDRFEFFIAGREIANGFSELNDAEDQAERFRKQVEEKDAGDLEAMHFDSDYIEALEYGLPPTAGEGIGIDRLVMLFTNSQSIRDVILFPHLRQ.

The Mg(2+) site is built by glutamate 408 and glutamate 415.

It belongs to the class-II aminoacyl-tRNA synthetase family. Homodimer. Requires Mg(2+) as cofactor.

Its subcellular location is the cytoplasm. It carries out the reaction tRNA(Lys) + L-lysine + ATP = L-lysyl-tRNA(Lys) + AMP + diphosphate. The protein is Lysine--tRNA ligase of Legionella pneumophila (strain Lens).